The primary structure comprises 816 residues: MKFTLNWLQKYVDTTGLTPTEIADKLTMLGLEVDSVAPIFEELAALKTGLVISCEKHPDADKLSLCQVQVGDDTHQIVCGAPNVREGLAVTVALPGAVLPGNFKIKKSKVRGIASAGMLCSERELGIGEDHDGIMELPEGMAHGQRFIDAMELSDTFIEVDLTPNRPDCASVIGTAREIAGKIGRPLQIPVKDRQIEAESRDFSVEVESSELCPRYTAKLIKNVTVGKSPWWLRKLLVSVGMRPINNIVDITNFVMLEYGQPLHAFDFKKVAGNKIVVRLPRENETEITTLDGTKREISAEMLLICDADKPIAVAGVMGGANSEIDAESTDILLESACFNPVSVRKTARNLKLPSEASYRFERGVDPGGVVNALDRAAELIAEIAGGALCSEGIDNYDGKKAVEVQRFSISRTSSLIGVEFSGEELTAMLTSIEMVVEKDPENEDILLVTAPTFRIDIEREADLVEEIARIYGYDNVPTATPLVALSYPEQDDDRLKRYPLALKLTRIGFNEAINYSFVTAQHADMLQLSEQDYRRKVVTLLNPLSEEQAVMRACLLPSLLENVKRNISFQKTAVKLFEIGKIFLAQGEDVQPIERQCITGVLSGNKFGESSSLYFKSANVDIFDAKGTVEFILSEMGLTDLANNEKIEFTVPPEGAREPFSTQDYALTIHLGPNVLGTIGKVEEEVLKSFGIKHEVYYFDLNFDALCALSPQTKAFSSLPVYPAVKRDIALVVPASISAGELLATVRSSRDKLMEYAEIFDVFEGGKIQKGYKSVAVSITYRSQTKTLTEKNVEKSHSKIVSLLTDRFGGSFRDA.

Residues 40-148 enclose the tRNA-binding domain; sequence FEELAALKTG…EGMAHGQRFI (109 aa). Positions 401–479 constitute a B5 domain; that stretch reads KAVEVQRFSI…RIYGYDNVPT (79 aa). Residues aspartate 457, aspartate 463, glutamate 466, and glutamate 467 each coordinate Mg(2+). In terms of domain architecture, FDX-ACB spans 721–814; it reads PVYPAVKRDI…LTDRFGGSFR (94 aa).

This sequence belongs to the phenylalanyl-tRNA synthetase beta subunit family. Type 1 subfamily. Tetramer of two alpha and two beta subunits. It depends on Mg(2+) as a cofactor.

Its subcellular location is the cytoplasm. It carries out the reaction tRNA(Phe) + L-phenylalanine + ATP = L-phenylalanyl-tRNA(Phe) + AMP + diphosphate + H(+). This chain is Phenylalanine--tRNA ligase beta subunit, found in Desulfotalea psychrophila (strain LSv54 / DSM 12343).